The sequence spans 773 residues: Linolenate 9R-lipoxygenase (773 aa).

The Lipoxygenase domain maps to 176-773 (YEWVDSKKKS…LEDLMMSINI (598 aa)). The Fe cation site is built by histidine 515, histidine 520, and isoleucine 773.

Belongs to the lipoxygenase family.

The catalysed reaction is (9Z,12Z,15Z)-octadecatrienoate + O2 = (9R,10E,12Z,15Z)-9-hydroperoxyoctadeca-10,12,15-trienoate. Its pathway is lipid metabolism; oxylipin biosynthesis. Catalyzes the conversion of alpha-linoleate to (9R,10E,12Z,15Z)-9-hydroperoxyoctadeca-10,12,15-trienoate in oxylipin biosynthesis. Also converts alpha-linoleate to (9R,10E,12Z)-9-hydroperoxyoctadeca-10,12-dienoate. In Nostoc sp. (strain PCC 7120 / SAG 25.82 / UTEX 2576), this protein is Linolenate 9R-lipoxygenase.